The primary structure comprises 99 residues: Putative septation protein SpoVG (99 aa).

The protein belongs to the SpoVG family.

Its function is as follows. Could be involved in septation. The sequence is that of Putative septation protein SpoVG from Aster yellows witches'-broom phytoplasma (strain AYWB).